Consider the following 123-residue polypeptide: Putative C-type lectin protein FPV003/FPV258 (123 aa).

Residues 21-122 (CRGPYTSYNN…CNATYGFVCI (102 aa)) enclose the C-type lectin domain.

The chain is Putative C-type lectin protein FPV003/FPV258 from Fowlpox virus (strain NVSL) (FPV).